Here is a 436-residue protein sequence, read N- to C-terminus: MILLQVICTIWTCLFIPLLNAEEFVPKVTETLSEYSFSLESFDDSNSLIRLDNQVVWISSDSGENWEAVKEIEGHILELIVDPLHGQDRAFVSIHLSPKFYVTDDRGKSWRALTIPVSENCRLGTSCSIATHPTDKKYLIADCPCFINDNGYIQIQNETYFTNDGESFYNIEPSLKKKEDDHITSSSCNFVKSSKDSDIEGNDASILCLFSNHGYDSDRHLSAAYTQLALSTDGGKTFKKFDEFNDKIIYQYKILKSHIIVSTQDDRYNEMSPMDIWISNDASTFQKARLPAQVRHVHMYGIYEDSIGRIIIPISTIFTDEKNDQPAPSEILISDSQGLKFLPVEWTINPHFGYIDIASPHFLEGTIIGSFHPSFDYSHNKGKYNKKIARYETKISVDNGLTWSNLKVVDEENADSFPCDITRPERCSLQNPFYSI.

A helical transmembrane segment spans residues 1 to 21; sequence MILLQVICTIWTCLFIPLLNA. BNR repeat units follow at residues 57–68 and 101–112; these read WISSDSGENWEA and YVTDDRGKSWRA. The N-linked (GlcNAc...) asparagine glycan is linked to Asn157. 2 BNR repeats span residues 229-240 and 394-405; these read ALSTDGGKTFKK and KISVDNGLTWSN.

The protein localises to the membrane. This is an uncharacterized protein from Saccharomyces cerevisiae (strain ATCC 204508 / S288c) (Baker's yeast).